Reading from the N-terminus, the 237-residue chain is Ribonuclease 3 (237 aa).

Residues 5-136 form the RNase III domain; it reads VDELSARLGV…VIAALFLDQG (132 aa). A Mg(2+)-binding site is contributed by Glu-49. Asp-53 is a catalytic residue. The Mg(2+) site is built by Asp-122 and Glu-125. The active site involves Glu-125. The DRBM domain maps to 163–232; the sequence is DYKSRLQARI…ARAALDALEG (70 aa). A compositionally biased stretch (basic and acidic residues) spans 185–208; sequence IDRSGPEHRPEFTVEVRAGEERLG. The disordered stretch occupies residues 185-237; the sequence is IDRSGPEHRPEFTVEVRAGEERLGTGKGPSKQAAEQAAARAALDALEGGTDGR. The segment covering 216–231 has biased composition (low complexity); that stretch reads QAAEQAAARAALDALE.

It belongs to the ribonuclease III family. As to quaternary structure, homodimer. It depends on Mg(2+) as a cofactor.

Its subcellular location is the cytoplasm. It catalyses the reaction Endonucleolytic cleavage to 5'-phosphomonoester.. Digests double-stranded RNA. Involved in the processing of primary rRNA transcript to yield the immediate precursors to the large and small rRNAs (23S and 16S). Processes some mRNAs, and tRNAs when they are encoded in the rRNA operon. Processes pre-crRNA and tracrRNA of type II CRISPR loci if present in the organism. This chain is Ribonuclease 3, found in Roseiflexus sp. (strain RS-1).